A 382-amino-acid polypeptide reads, in one-letter code: Putative UDP-sugar transporter DDB_G0278631 (382 aa).

The next 7 membrane-spanning stretches (helical) occupy residues 117–137 (FSAS…ILHI), 183–203 (MYSA…YFIL), 211–231 (IIAS…TDLS), 234–254 (SLGY…LIYV), 264–284 (YDML…LMIV), 302–322 (FQAY…CIFF), and 354–374 (IIIH…SIWY).

This sequence belongs to the TPT transporter family. SLC35D subfamily.

The protein resides in the membrane. Functionally, may be nvolved in the import of UDP-sugars. The polypeptide is Putative UDP-sugar transporter DDB_G0278631 (Dictyostelium discoideum (Social amoeba)).